The following is a 223-amino-acid chain: Lipoprotein-releasing system ATP-binding protein LolD (223 aa).

Residues M1–A223 form the ABC transporter domain. ATP is bound at residue G32–S39.

This sequence belongs to the ABC transporter superfamily. Lipoprotein translocase (TC 3.A.1.125) family. The complex is composed of two ATP-binding proteins (LolD) and two transmembrane proteins (LolC and LolE).

It localises to the cell inner membrane. Functionally, part of the ABC transporter complex LolCDE involved in the translocation of mature outer membrane-directed lipoproteins, from the inner membrane to the periplasmic chaperone, LolA. Responsible for the formation of the LolA-lipoprotein complex in an ATP-dependent manner. The polypeptide is Lipoprotein-releasing system ATP-binding protein LolD (Koribacter versatilis (strain Ellin345)).